The sequence spans 789 residues: Cadherin-10 (789 aa).

The first 22 residues, 1-22 (MTIQQVLLLLLLWMWLLHPCRT), serve as a signal peptide directing secretion. Residues 23-54 (EMLFRRTPDLRPKGFVGRTSGSDGKALHRQKR) constitute a propeptide that is removed on maturation. 5 Cadherin domains span residues 55-160 (GWMW…EPTF), 161-269 (PEEI…PPRF), 270-384 (PQST…PPVF), 385-487 (SRSS…DNAP), and 488-606 (QFAV…LLLP). Residues 55–606 (GWMWNQFFLL…SCNAEALLLP (552 aa)) are Extracellular-facing. An N-linked (GlcNAc...) asparagine glycan is attached at Asn-256. N-linked (GlcNAc...) asparagine glycosylation is found at Asn-438, Asn-456, and Asn-534. The helical transmembrane segment at 607-634 (AGLSTGALIAILLCIIILLVIVVLFAAL) threads the bilayer. The Cytoplasmic segment spans residues 635 to 789 (KRQRKKEPLI…GGGESDKDAS (155 aa)).

It is found in the cell membrane. Its function is as follows. Cadherins are calcium-dependent cell adhesion proteins. They preferentially interact with themselves in a homophilic manner in connecting cells; cadherins may thus contribute to the sorting of heterogeneous cell types. This chain is Cadherin-10 (CDH10), found in Gallus gallus (Chicken).